The sequence spans 374 residues: Cyclin-D (374 aa).

The protein belongs to the cyclin family. Cyclin D subfamily.

The polypeptide is Cyclin-D (CycD) (Ostreococcus tauri).